An 882-amino-acid chain; its full sequence is Protein translocase subunit SecA (882 aa).

ATP is bound by residues Q79, 97 to 101 (GEGKT), and D487.

The protein belongs to the SecA family.

It localises to the plastid. Its subcellular location is the chloroplast stroma. The protein resides in the chloroplast thylakoid membrane. It catalyses the reaction ATP + H2O + cellular proteinSide 1 = ADP + phosphate + cellular proteinSide 2.. Has a central role in coupling the hydrolysis of ATP to the transfer of proteins across the thylakoid membrane. This is Protein translocase subunit SecA from Gracilaria tenuistipitata var. liui (Red alga).